The sequence spans 142 residues: Large ribosomal subunit protein uL13 (142 aa).

It belongs to the universal ribosomal protein uL13 family. In terms of assembly, part of the 50S ribosomal subunit.

Functionally, this protein is one of the early assembly proteins of the 50S ribosomal subunit, although it is not seen to bind rRNA by itself. It is important during the early stages of 50S assembly. The polypeptide is Large ribosomal subunit protein uL13 (Desulfotalea psychrophila (strain LSv54 / DSM 12343)).